A 106-amino-acid chain; its full sequence is uncharacterized protein (106 aa).

It belongs to the HesB/IscA family.

This is an uncharacterized protein from Sinorhizobium fredii (strain NBRC 101917 / NGR234).